Here is a 286-residue protein sequence, read N- to C-terminus: Protein N-terminal amidase (286 aa).

The CN hydrolase domain maps to 1-286 (MKFGCVQFFP…NGIVVGELEK (286 aa)). The active-site Proton acceptor is E43. The active-site Proton donor is K121. C155 functions as the Nucleophile in the catalytic mechanism.

Belongs to the carbon-nitrogen hydrolase superfamily.

It localises to the cytoplasm. The protein resides in the nucleus. In terms of biological role, deamidates N-terminal Asn and Gln. Component of a targeting complex in the N-end rule pathway. This Schizosaccharomyces pombe (strain 972 / ATCC 24843) (Fission yeast) protein is Protein N-terminal amidase (nta1).